The following is a 467-amino-acid chain: Putative ankyrin repeat protein R911 (467 aa).

ANK repeat units follow at residues 38 to 70 (IKTDIIEYVMENDLIDILKYLSLLKKLGHPIIV), 79 to 108 (TLNKYLIKNCGENQLEIVKFLVSLGADIRA), 109 to 138 (GNDYAVGLSSQNGHLEVVKYLVNQGSDIRA), 140 to 168 (NDYAVRWASGNGHLEVVKYLVSQGANIRA), 170 to 198 (NDHAIGLASYYGYLEVVKYLVSQGADIRS), 199 to 228 (DNDYAVRMASRNGHIEVVEYLVSQGANIRS), 229 to 258 (DNDYAVRLASQNGHLEVVKYLVSQGADIKS), 260 to 288 (NDYAVRLASQNGHLEVVEYLVTQGTNIRV), 289 to 318 (NNNYAVEWASKNGNLEVVKYLISQGADIIA), 320 to 348 (NNFAVRWASRNGHLEVVKYLVSLGADIKS), 350 to 378 (NDYAVRWASGNGHLEVVKYLVSQGSDIRV), 379 to 408 (ENDYAVRWASRNGHFDVIKYLVSQGADIRS), 410 to 438 (NDYAVKWASENGHLEVVKFLVSLGADIKA), and 440 to 467 (DDYAVRWASEKGHLEVVEYLVSQGAVLS).

The sequence is that of Putative ankyrin repeat protein R911 from Acanthamoeba polyphaga mimivirus (APMV).